A 592-amino-acid chain; its full sequence is Sodium- and chloride-dependent transporter XTRP3A (592 aa).

The Cytoplasmic segment spans residues 1-7 (MEKARPQ). The chain crosses the membrane as a helical span at residues 8–28 (WGHPLQFVFACISYAVGLGNV). The Extracellular portion of the chain corresponds to 29 to 42 (WRFPYLCQMYGGGS). Residues 43 to 63 (FLVPYIIMLIVEGMPLLYLEL) traverse the membrane as a helical segment. The Cytoplasmic portion of the chain corresponds to 64 to 79 (AVGQRMRQGSIGAWRT). The chain crosses the membrane as a helical span at residues 80–100 (ISPYLSGVGVASVVVSFFLSM). The Extracellular portion of the chain corresponds to 101–165 (YYNVINAWGF…ISPSIQENGG (65 aa)). Asn131 carries an N-linked (GlcNAc...) asparagine glycan. Residues 166 to 186 (VQWEPALCLTLAWLMVYLCIL) traverse the membrane as a helical segment. Residues 187-194 (RGTESTGK) are Cytoplasmic-facing. Residues 195 to 215 (VVYFTASMPYCVLIIYLVRGL) form a helical membrane-spanning segment. Over 216-241 (TLHGATNGLMYMFTPKMEQLANPKAW) the chain is Extracellular. Residues 242-262 (INAATQIFFSLGLGFGSLIAF) traverse the membrane as a helical segment. Over 263-276 (ASYNEPSNNCQKHA) the chain is Cytoplasmic. The chain crosses the membrane as a helical span at residues 277–297 (IIVSIINSSTSIFASIVTFSI). Topologically, residues 298-389 (YGFKATFNYE…EAIKNMEVSQ (92 aa)) are extracellular. Residues 390–410 (LWSVLYFFMLLMLGIGSMLGN) traverse the membrane as a helical segment. Residues 411-431 (TAAILTPLTDSKVISSYLPKE) are Cytoplasmic-facing. A helical transmembrane segment spans residues 432–452 (AISGLVCLINCAVGMVFTMEA). At 453 to 465 (GNYWFDIFNDYAA) the chain is on the extracellular side. The chain crosses the membrane as a helical span at residues 466–486 (TLSLLLIVLVETIAVCYVYGL). Residues 487 to 504 (KRFESDLRAMTGRTLSWY) are Cytoplasmic-facing. Residues 505 to 525 (WKVMWAFVSPLLIVGLFIFYL) traverse the membrane as a helical segment. At 526 to 554 (SDYILTGTLQYQAWDATQGQLVTKDYPPH) the chain is on the extracellular side. Residues 555-575 (ALAVIGLLVASSTMCIPLVAL) form a helical membrane-spanning segment. Residues 576 to 592 (GTFIRNRLKRGGSAPVA) lie on the Cytoplasmic side of the membrane.

Belongs to the sodium:neurotransmitter symporter (SNF) (TC 2.A.22) family. SLC6A20 subfamily. Expressed in brain, kidney, small intestine, thymus, spleen and lung. In the brain, expressed in cerebellum, cortex and brain stem. Not detected in liver, muscle or heart. In brain, widespread in various regions, including the meninges, choroid plexus, cortex, hippocampus and thalamus.

The protein localises to the apical cell membrane. It carries out the reaction L-proline(out) + chloride(out) + 2 Na(+)(out) = L-proline(in) + chloride(in) + 2 Na(+)(in). The enzyme catalyses 4-hydroxy-L-proline(out) + chloride(out) + 2 Na(+)(out) = 4-hydroxy-L-proline(in) + chloride(in) + 2 Na(+)(in). It catalyses the reaction 2-methyl-2-(methylamino)propanoate(out) + chloride(out) + 2 Na(+)(out) = 2-methyl-2-(methylamino)propanoate(in) + chloride(in) + 2 Na(+)(in). The catalysed reaction is L-pipecolate(out) + chloride(out) + 2 Na(+)(out) = L-pipecolate(in) + chloride(in) + 2 Na(+)(in). It carries out the reaction glycine betaine(out) + chloride(out) + 2 Na(+)(out) = glycine betaine(in) + chloride(in) + 2 Na(+)(in). The enzyme catalyses glycine(out) + chloride(out) + 2 Na(+)(out) = glycine(in) + chloride(in) + 2 Na(+)(in). Mediates the Na(+)- and Cl(-)-dependent uptake of imino acids such as L-proline, N-methyl-L-proline and pipecolate as well as N-methylated amino acids. Also transports glycine, regulates proline and glycine homeostasis in the brain playing a role in the modulation of NMDAR currents. This Mus musculus (Mouse) protein is Sodium- and chloride-dependent transporter XTRP3A.